The chain runs to 470 residues: Probable citrate synthase, mitochondrial (470 aa).

Catalysis depends on residues histidine 297, histidine 351, and aspartate 406.

Belongs to the citrate synthase family. As to quaternary structure, homodimer.

It is found in the mitochondrion matrix. The enzyme catalyses oxaloacetate + acetyl-CoA + H2O = citrate + CoA + H(+). It functions in the pathway carbohydrate metabolism; tricarboxylic acid cycle; isocitrate from oxaloacetate: step 1/2. This chain is Probable citrate synthase, mitochondrial, found in Leishmania braziliensis.